We begin with the raw amino-acid sequence, 763 residues long: 5-methyltetrahydropteroyltriglutamate--homocysteine methyltransferase (763 aa).

Residues 16-19 and Lys-117 each bind 5-methyltetrahydropteroyltri-L-glutamate; that span reads RELK. L-homocysteine-binding positions include 440 to 442 and Glu-493; that span reads IGS. L-methionine is bound by residues 440–442 and Glu-493; that span reads IGS. 5-methyltetrahydropteroyltri-L-glutamate is bound by residues 524-525 and Trp-570; that span reads RC. Asp-608 provides a ligand contact to L-homocysteine. Asp-608 contacts L-methionine. Glu-614 serves as a coordination point for 5-methyltetrahydropteroyltri-L-glutamate. Zn(2+) contacts are provided by His-650, Cys-652, and Glu-674. His-703 functions as the Proton donor in the catalytic mechanism. A Zn(2+)-binding site is contributed by Cys-735.

Belongs to the vitamin-B12 independent methionine synthase family. The cofactor is Zn(2+).

It catalyses the reaction 5-methyltetrahydropteroyltri-L-glutamate + L-homocysteine = tetrahydropteroyltri-L-glutamate + L-methionine. It functions in the pathway amino-acid biosynthesis; L-methionine biosynthesis via de novo pathway; L-methionine from L-homocysteine (MetE route): step 1/1. Functionally, catalyzes the transfer of a methyl group from 5-methyltetrahydrofolate to homocysteine resulting in methionine formation. This chain is 5-methyltetrahydropteroyltriglutamate--homocysteine methyltransferase, found in Alcanivorax borkumensis (strain ATCC 700651 / DSM 11573 / NCIMB 13689 / SK2).